A 473-amino-acid polypeptide reads, in one-letter code: Mitochondrial distribution and morphology protein 10 (473 aa).

Belongs to the MDM10 family. As to quaternary structure, component of the ER-mitochondria encounter structure (ERMES) or MDM complex, composed of MMM1, MDM10, MDM12 and MDM34. Associates with the mitochondrial outer membrane sorting assembly machinery SAM(core) complex.

The protein resides in the mitochondrion outer membrane. In terms of biological role, component of the ERMES/MDM complex, which serves as a molecular tether to connect the endoplasmic reticulum and mitochondria. Components of this complex are involved in the control of mitochondrial shape and protein biogenesis and may function in phospholipid exchange. MDM10 is involved in the late assembly steps of the general translocase of the mitochondrial outer membrane (TOM complex). Functions in the TOM40-specific route of the assembly of outer membrane beta-barrel proteins, including the association of TOM40 with the receptor TOM22 and small TOM proteins. Can associate with the SAM(core) complex as well as the MDM12-MMM1 complex, both involved in late steps of the major beta-barrel assembly pathway, that is responsible for biogenesis of all outer membrane beta-barrel proteins. May act as a switch that shuttles between both complexes and channels precursor proteins into the TOM40-specific pathway. Plays a role in mitochondrial morphology and in the inheritance of mitochondria. This Candida albicans (strain SC5314 / ATCC MYA-2876) (Yeast) protein is Mitochondrial distribution and morphology protein 10.